A 720-amino-acid chain; its full sequence is DNA replication licensing factor mcm7-B (720 aa).

Residues 183–210 form a C4-type zinc finger; sequence CDQCGAETYQPIQSPTFMPLIMCPSREC. The MCM domain maps to 331 to 537; sequence FYEKLAASIA…NDLRLAQHIT (207 aa). Residues Y344, G383, A385, K386, S387, N488, R513, and R603 each contribute to the ATP site. Positions 512–515 match the Arginine finger motif; the sequence is SRFD.

This sequence belongs to the MCM family. In terms of assembly, component of the mcm2-7 complex (RLF-M). The complex forms a toroidal hexameric ring with the proposed subunit order mcm2-mcm6-mcm4-mcm7-mcm3-mcm5. The heterodimer of mmcm3/mcm5 interacts with mcm4, mmcm6, mcm7 and weakly with mcm2. The N-terminus is required for interaction with mmcm3, though this interaction may not be direct, and remains in a complex with mmcm3 throughout the cell cycle. Begins to associate with zmcm6 at the neurula stage. Component of the replisome complex. Component of the CMG helicase complex, composed of the mcm2-7 complex, the GINS complex and cdc45. Ubiquitinated by traip when forks converge following formation of DNA interstrand cross-links. Short ubiquitin chains on mcm7 promote recruitment of DNA glycosylase neil3. If the interstrand cross-link cannot be cleaved by neil3, the ubiquitin chains continue to grow on mcm7, promoting the unloading of the CMG helicase complex by the vcp/p97 ATPase.

It localises to the nucleus. It is found in the chromosome. It carries out the reaction ATP + H2O = ADP + phosphate + H(+). Functionally, acts as a component of the mcm2-7 complex (mcm complex) which is the putative replicative helicase essential for 'once per cell cycle' DNA replication initiation and elongation in eukaryotic cells. The active ATPase sites in the mcm2-7 ring are formed through the interaction surfaces of two neighboring subunits such that a critical structure of a conserved arginine finger motif is provided in trans relative to the ATP-binding site of the Walker A box of the adjacent subunit. The six ATPase active sites, however, are likely to contribute differentially to the complex helicase activity. The existence of maternal and zygotic forms of mcm3 and mcm6 suggests that specific forms of mcm2-7 complexes may be used during different stages of development. The polypeptide is DNA replication licensing factor mcm7-B (mcm7-b) (Xenopus laevis (African clawed frog)).